The sequence spans 371 residues: Pyruvate dehydrogenase E1 component subunit alpha (371 aa).

In terms of assembly, heterodimer of an alpha and a beta chain. Requires thiamine diphosphate as cofactor.

The enzyme catalyses N(6)-[(R)-lipoyl]-L-lysyl-[protein] + pyruvate + H(+) = N(6)-[(R)-S(8)-acetyldihydrolipoyl]-L-lysyl-[protein] + CO2. The pyruvate dehydrogenase complex catalyzes the overall conversion of pyruvate to acetyl-CoA and CO(2). It contains multiple copies of three enzymatic components: pyruvate dehydrogenase (E1), dihydrolipoamide acetyltransferase (E2) and lipoamide dehydrogenase (E3). This chain is Pyruvate dehydrogenase E1 component subunit alpha, found in Bacillus cereus.